Reading from the N-terminus, the 58-residue chain is Preprotein translocase subunit SecG (58 aa).

Residues 1 to 33 (MARRRKYEGLNPFVAAGLIKFSEEGELEKIKLS) are Cytoplasmic-facing. Residues 34-55 (PKAAIAISLAIIAAILALNLLL) form a helical membrane-spanning segment. The Extracellular portion of the chain corresponds to 56 to 58 (PPP).

It belongs to the SEC61-beta family. As to quaternary structure, component of the protein translocase complex. Heterotrimer consisting of alpha (SecY), beta (SecG) and gamma (SecE) subunits. Can form oligomers of the heterotrimer.

It localises to the cell membrane. In terms of biological role, involved in protein export. The function of the beta subunit is unknown, but it may be involved in stabilization of the trimeric complex. In Pyrobaculum calidifontis (strain DSM 21063 / JCM 11548 / VA1), this protein is Preprotein translocase subunit SecG.